We begin with the raw amino-acid sequence, 122 residues long: Small ribosomal subunit protein uS13 (122 aa).

Residues 97–122 (PVRGQRTKTNARTRKGPARTVAGKKK) are disordered.

The protein belongs to the universal ribosomal protein uS13 family. As to quaternary structure, part of the 30S ribosomal subunit. Forms a loose heterodimer with protein S19. Forms two bridges to the 50S subunit in the 70S ribosome.

Its function is as follows. Located at the top of the head of the 30S subunit, it contacts several helices of the 16S rRNA. In the 70S ribosome it contacts the 23S rRNA (bridge B1a) and protein L5 of the 50S subunit (bridge B1b), connecting the 2 subunits; these bridges are implicated in subunit movement. Contacts the tRNAs in the A and P-sites. The sequence is that of Small ribosomal subunit protein uS13 from Geobacter sulfurreducens (strain ATCC 51573 / DSM 12127 / PCA).